The sequence spans 439 residues: Methylenetetrahydrofolate--tRNA-(uracil-5-)-methyltransferase TrmFO (439 aa).

9–14 (GAGLAG) lines the FAD pocket.

It belongs to the MnmG family. TrmFO subfamily. The cofactor is FAD.

The protein resides in the cytoplasm. The catalysed reaction is uridine(54) in tRNA + (6R)-5,10-methylene-5,6,7,8-tetrahydrofolate + NADH + H(+) = 5-methyluridine(54) in tRNA + (6S)-5,6,7,8-tetrahydrofolate + NAD(+). The enzyme catalyses uridine(54) in tRNA + (6R)-5,10-methylene-5,6,7,8-tetrahydrofolate + NADPH + H(+) = 5-methyluridine(54) in tRNA + (6S)-5,6,7,8-tetrahydrofolate + NADP(+). Functionally, catalyzes the folate-dependent formation of 5-methyl-uridine at position 54 (M-5-U54) in all tRNAs. In Lactobacillus delbrueckii subsp. bulgaricus (strain ATCC BAA-365 / Lb-18), this protein is Methylenetetrahydrofolate--tRNA-(uracil-5-)-methyltransferase TrmFO.